Reading from the N-terminus, the 415-residue chain is tRNA(Ile2) 2-agmatinylcytidine synthetase TiaS (415 aa).

Belongs to the TiaS family.

The protein localises to the cytoplasm. It carries out the reaction cytidine(34) in tRNA(Ile2) + agmatine + ATP + H2O = 2-agmatinylcytidine(34) in tRNA(Ile2) + AMP + 2 phosphate + 2 H(+). Its function is as follows. ATP-dependent agmatine transferase that catalyzes the formation of 2-agmatinylcytidine (agm2C) at the wobble position (C34) of tRNA(Ile2), converting the codon specificity from AUG to AUA. The protein is tRNA(Ile2) 2-agmatinylcytidine synthetase TiaS of Pyrobaculum neutrophilum (strain DSM 2338 / JCM 9278 / NBRC 100436 / V24Sta) (Thermoproteus neutrophilus).